The primary structure comprises 364 residues: Phosphoserine aminotransferase (364 aa).

Residue arginine 46 coordinates L-glutamate. Pyridoxal 5'-phosphate-binding positions include 80 to 81 (AR), tryptophan 106, threonine 157, aspartate 176, and glutamine 199. Lysine 200 carries the post-translational modification N6-(pyridoxal phosphate)lysine. A pyridoxal 5'-phosphate-binding site is contributed by 241–242 (NT).

The protein belongs to the class-V pyridoxal-phosphate-dependent aminotransferase family. SerC subfamily. In terms of assembly, homodimer. Pyridoxal 5'-phosphate is required as a cofactor.

Its subcellular location is the cytoplasm. It carries out the reaction O-phospho-L-serine + 2-oxoglutarate = 3-phosphooxypyruvate + L-glutamate. It catalyses the reaction 4-(phosphooxy)-L-threonine + 2-oxoglutarate = (R)-3-hydroxy-2-oxo-4-phosphooxybutanoate + L-glutamate. The protein operates within amino-acid biosynthesis; L-serine biosynthesis; L-serine from 3-phospho-D-glycerate: step 2/3. It participates in cofactor biosynthesis; pyridoxine 5'-phosphate biosynthesis; pyridoxine 5'-phosphate from D-erythrose 4-phosphate: step 3/5. Functionally, catalyzes the reversible conversion of 3-phosphohydroxypyruvate to phosphoserine and of 3-hydroxy-2-oxo-4-phosphonooxybutanoate to phosphohydroxythreonine. In Vibrio parahaemolyticus serotype O3:K6 (strain RIMD 2210633), this protein is Phosphoserine aminotransferase.